A 180-amino-acid chain; its full sequence is ATP synthase subunit delta (180 aa).

The protein belongs to the ATPase delta chain family. In terms of assembly, F-type ATPases have 2 components, F(1) - the catalytic core - and F(0) - the membrane proton channel. F(1) has five subunits: alpha(3), beta(3), gamma(1), delta(1), epsilon(1). F(0) has three main subunits: a(1), b(2) and c(10-14). The alpha and beta chains form an alternating ring which encloses part of the gamma chain. F(1) is attached to F(0) by a central stalk formed by the gamma and epsilon chains, while a peripheral stalk is formed by the delta and b chains.

Its subcellular location is the cell membrane. In terms of biological role, f(1)F(0) ATP synthase produces ATP from ADP in the presence of a proton or sodium gradient. F-type ATPases consist of two structural domains, F(1) containing the extramembraneous catalytic core and F(0) containing the membrane proton channel, linked together by a central stalk and a peripheral stalk. During catalysis, ATP synthesis in the catalytic domain of F(1) is coupled via a rotary mechanism of the central stalk subunits to proton translocation. Functionally, this protein is part of the stalk that links CF(0) to CF(1). It either transmits conformational changes from CF(0) to CF(1) or is implicated in proton conduction. This is ATP synthase subunit delta from Caldicellulosiruptor bescii (strain ATCC BAA-1888 / DSM 6725 / KCTC 15123 / Z-1320) (Anaerocellum thermophilum).